The primary structure comprises 566 residues: DDB1- and CUL4-associated factor 10 (566 aa).

Disordered stretches follow at residues 1 to 72 (MFPF…AERA) and 87 to 123 (TASA…GAGL). Phosphoserine is present on residues S50, S57, S67, S96, S99, and S100. Residues 87–100 (TASASQAKLSPSSS) are compositionally biased toward low complexity. Residue R141 is modified to Omega-N-methylarginine. 4 WD repeats span residues 173-212 (RTHG…HIKT), 216-254 (AHED…TKVC), 258-297 (GHTS…EDGC), and 303-342 (FHTR…KSLE). The segment covering 354 to 374 (TTSSSDLTTTSSSSGSRVSGS) has biased composition (low complexity). The segment at 354–413 (TTSSSDLTTTSSSSGSRVSGSPCHHNDSNSTEKHMSRASQREGVSPRNSLEVLTPEVPGE) is disordered. S356 is modified (phosphoserine). Residues 377 to 388 (HHNDSNSTEKHM) are compositionally biased toward basic and acidic residues. 3 WD repeats span residues 415-455 (DRGN…QEGA), 477-515 (VGRG…SELV), and 533-566 (SHND…QPKF).

This sequence belongs to the WD repeat DCAF10 family. Interacts with DDB1.

It participates in protein modification; protein ubiquitination. In terms of biological role, may function as a substrate receptor for CUL4-DDB1 E3 ubiquitin-protein ligase complex. In Mus musculus (Mouse), this protein is DDB1- and CUL4-associated factor 10 (Dcaf10).